The sequence spans 149 residues: Calmodulin (149 aa).

Alanine 2 carries the post-translational modification N-acetylalanine. EF-hand domains are found at residues glutamate 8–asparagine 43, proline 44–aspartate 79, aspartate 81–lysine 116, and leucine 117–lysine 149. Aspartate 21, aspartate 23, aspartate 25, glutamine 27, glutamate 32, aspartate 57, aspartate 59, asparagine 61, threonine 63, glutamate 68, aspartate 94, aspartate 96, asparagine 98, glutamate 105, aspartate 130, aspartate 132, aspartate 134, arginine 136, and glutamate 141 together coordinate Ca(2+).

It belongs to the calmodulin family.

In terms of biological role, calmodulin mediates the control of a large number of enzymes, ion channels and other proteins by Ca(2+). Among the enzymes to be stimulated by the calmodulin-Ca(2+) complex are a number of protein kinases and phosphatases. The chain is Calmodulin (camA) from Emericella nidulans (strain FGSC A4 / ATCC 38163 / CBS 112.46 / NRRL 194 / M139) (Aspergillus nidulans).